We begin with the raw amino-acid sequence, 323 residues long: Probable proline iminopeptidase (323 aa).

Residues 37 to 301 (VVLHGGPGSR…VIVDEAGHDA (265 aa)) form the AB hydrolase-1 domain. Residue Ser114 is the Nucleophile of the active site. Asp271 is a catalytic residue. His299 (proton donor) is an active-site residue.

This sequence belongs to the peptidase S33 family.

Its subcellular location is the cytoplasm. It carries out the reaction Release of N-terminal proline from a peptide.. Functionally, specifically catalyzes the removal of N-terminal proline residues from peptides. This is Probable proline iminopeptidase from Streptomyces coelicolor (strain ATCC BAA-471 / A3(2) / M145).